A 434-amino-acid chain; its full sequence is Protein ENHANCED PSEUDOMONAS SUSCEPTIBILITY 1 (434 aa).

The Proton acceptor role is filled by Asp376.

This sequence belongs to the plant acyltransferase family.

Its function is as follows. Required for pathogen-induced salicylic acid (SA) accumulation and SA-mediated resistance to virulent and avirulent pathogens (e.g. P.syringae). In Arabidopsis thaliana (Mouse-ear cress), this protein is Protein ENHANCED PSEUDOMONAS SUSCEPTIBILITY 1.